The sequence spans 368 residues: Chorismate synthase (368 aa).

Residues arginine 48 and arginine 54 each contribute to the NADP(+) site. FMN contacts are provided by residues 131 to 133 (RSS), 243 to 244 (NA), glycine 292, 307 to 311 (KPTSS), and arginine 333.

It belongs to the chorismate synthase family. As to quaternary structure, homotetramer. FMNH2 serves as cofactor.

The catalysed reaction is 5-O-(1-carboxyvinyl)-3-phosphoshikimate = chorismate + phosphate. It participates in metabolic intermediate biosynthesis; chorismate biosynthesis; chorismate from D-erythrose 4-phosphate and phosphoenolpyruvate: step 7/7. In terms of biological role, catalyzes the anti-1,4-elimination of the C-3 phosphate and the C-6 proR hydrogen from 5-enolpyruvylshikimate-3-phosphate (EPSP) to yield chorismate, which is the branch point compound that serves as the starting substrate for the three terminal pathways of aromatic amino acid biosynthesis. This reaction introduces a second double bond into the aromatic ring system. This chain is Chorismate synthase, found in Nitrobacter winogradskyi (strain ATCC 25391 / DSM 10237 / CIP 104748 / NCIMB 11846 / Nb-255).